A 1146-amino-acid chain; its full sequence is Integrin alpha-PS1 (1146 aa).

The first 30 residues, 1–30 (MLELPFTTIRPNCRLRQNLGILIILQCVLT), serve as a signal peptide directing secretion. Topologically, residues 31 to 1085 (CYNFNLEQRL…NQQRDTSIPW (1055 aa)) are extracellular. FG-GAP repeat units follow at residues 38 to 105 (QRLP…FDDC), 121 to 186 (LSPP…FEEV), 193 to 245 (RPVQ…YLQR), 254 to 303 (HSDL…KSTD), 304 to 366 (NPIP…TLPM), 367 to 422 (KYTL…GLNS), and 432 to 494 (ELGG…RKEL). Asn68, Asn86, and Asn147 each carry an N-linked (GlcNAc...) asparagine glycan. Residues Asn470, Asn511, Asn657, Asn680, Asn711, Asn718, Asn761, and Asn928 are each glycosylated (N-linked (GlcNAc...) asparagine). A disordered region spans residues 938-958 (YYSSSHRDDHSDDTQSNRNRV). The segment covering 942–952 (SHRDDHSDDTQ) has biased composition (basic and acidic residues). Asn1027 carries an N-linked (GlcNAc...) asparagine glycan. Residues 1086-1106 (LIIILGIVGGLLLLALVTYVL) traverse the membrane as a helical segment. The Cytoplasmic portion of the chain corresponds to 1107 to 1146 (WKVGFFKRIRPTDPTLSGNLEKMNEEKPFLAPSKNTHHVF).

Belongs to the integrin alpha chain family. Heterodimer of an alpha and a beta subunit. The alpha subunit is composed of a heavy and a light chain linked by a disulfide bond. Alpha-PS1 associates with beta-PS. Expressed in follicle cells (at protein level). At syncytial blastoderm stage, expressed in the ectoderm but not in the mesodermal precursors. At embryonic stage 7, expressed in dorsal and ventrolateral ectoderm and in some yolk nuclei. At late stage 10, expression is homogeneous in the ectoderm and is particularly abundant in the anterior and posterior midgut primordia. At stage 11, strongly expressed in a metameric pattern in the ectoderm, in the proctodeum and in the posterior midgut primordium. At stage 12, accumulates at the segment boundaries that start to become morphologically visible, similar expression pattern is observed in the central nervous system. In third larval instar wing imaginal disk, strongly expressed in the dorsal compartment, in the adepithelial cells and in patches on the peripodial membrane covering the imaginal disk to the outside.

The protein resides in the apical cell membrane. It localises to the lateral cell membrane. It is found in the basal cell membrane. In terms of biological role, integrin alpha-PS1/beta-PS is a receptor for laminin. This chain is Integrin alpha-PS1 (mew), found in Drosophila melanogaster (Fruit fly).